The primary structure comprises 525 residues: UPF0288 protein MM_0912 (525 aa).

It belongs to the UPF0288 family.

This Methanosarcina mazei (strain ATCC BAA-159 / DSM 3647 / Goe1 / Go1 / JCM 11833 / OCM 88) (Methanosarcina frisia) protein is UPF0288 protein MM_0912.